We begin with the raw amino-acid sequence, 191 residues long: Lipid A 1-phosphatase (191 aa).

Transmembrane regions (helical) follow at residues 22 to 42 (LLAL…PKVP), 60 to 80 (FIPT…VGLF), 117 to 137 (GNFN…AFLM), 145 to 162 (YLWL…RIYL), and 164 to 184 (MHTI…VGLF).

This sequence belongs to the lipid A LpxE 1-phosphatase family.

It is found in the cell inner membrane. The protein operates within bacterial outer membrane biogenesis; LPS lipid A biosynthesis. Its function is as follows. Removes the 1-phosphate group from tetra- and probably hexaacylated lipid A species. Absence of the 1-phosphate group renders the bacteria partially resistant to host-derived cationic antimicrobial peptides (CAMP), allowing it to camouflage itself from the host innate immune response, and plays a role in the long-term colonization of the host's stomach. The polypeptide is Lipid A 1-phosphatase (Helicobacter pylori (strain J99 / ATCC 700824) (Campylobacter pylori J99)).